The following is a 387-amino-acid chain: Phosphoglycerate kinase (387 aa).

Residues 21–23 (DLN), arginine 36, 59–62 (HLGR), arginine 113, and arginine 146 each bind substrate. Residues lysine 197, glutamate 314, and 340–343 (GGDT) each bind ATP.

This sequence belongs to the phosphoglycerate kinase family. In terms of assembly, monomer.

The protein resides in the cytoplasm. The catalysed reaction is (2R)-3-phosphoglycerate + ATP = (2R)-3-phospho-glyceroyl phosphate + ADP. Its pathway is carbohydrate degradation; glycolysis; pyruvate from D-glyceraldehyde 3-phosphate: step 2/5. This Pasteurella multocida (strain Pm70) protein is Phosphoglycerate kinase (pgk).